We begin with the raw amino-acid sequence, 127 residues long: Multifunctional methyltransferase subunit trm112 (127 aa).

Residues 2 to 123 (KVMTLNFLTC…KNGVANFLLP (122 aa)) enclose the TRM112 domain.

Belongs to the TRM112 family. In terms of assembly, heterodimer of mtq2-rmt-1/trm112, forming the eRF1 methyltransferase. Rmt-1/trm112 is necessary for the solubility and activity of the catalytic subunit mtq2. Interacts with trm11; required for full tRNA methyltransferase activity. Interacts with bud23; required for full rRNA methyltransferase activity.

The protein resides in the cytoplasm. Its subcellular location is the nucleus. Acts as an activator of both rRNA/tRNA and protein methyltransferases. Together with methyltransferase mtq2, required for the methylation of eRF1 on 'Gln-182'. Together with methyltransferase trm11, required for the formation of 2-methylguanosine at position 10 (m2G10) in tRNA. Together with methyltransferase bud23, required for the formation of a 7-methylguanine in 18S rRNA. Involved in biogenesis of both 40S and 60S ribosomal subunits. This chain is Multifunctional methyltransferase subunit trm112 (rmt-1), found in Neurospora crassa (strain ATCC 24698 / 74-OR23-1A / CBS 708.71 / DSM 1257 / FGSC 987).